An 898-amino-acid polypeptide reads, in one-letter code: Metalloprotease StcE (898 aa).

The first 35 residues, 1 to 35, serve as a signal peptide directing secretion; the sequence is MNTKMNERWRTPMKLKYLSCTILAPLAIGVFSATA. The Peptidase M66 domain maps to 296–551; the sequence is ELLLHTIDIG…QRFFENKAVF (256 aa). Residue histidine 446 coordinates Zn(2+). The active site involves glutamate 447. Zn(2+) is bound by residues histidine 450 and histidine 456.

The cofactor is Zn(2+).

It localises to the secreted. With respect to regulation, inhibited by divalent cation chelators such as BPS and EDTA. Virulence factor that contributes to intimate adherence of enterohemorrhagic E.coli (EHEC) O157:H7 to host cells. Is able to cleave the secreted human mucin 7 (MUC7) and the glycoprotein 340 (DMBT1/GP340). Also cleaves human C1 inhibitor (SERPING1), a regulator of multiple inflammatory pathways, and binds and localizes it to bacterial and host cell surfaces, protecting them from complement-mediated lysis. Therefore, the current model proposes two roles for StcE during infection: it acts first as a mucinase, allowing passage of EHEC through the oral cavity by cleaving the salivary glycoproteins that are responsible for bacterial aggregation. Similarly, in the colon, StcE cleaves the glycoproteins that protect the intestinal epithelial surface, allowing EHEC to come into close contact with host cell membranes. Secondly, it acts as an anti-inflammatory agent by localizing SERPING1 to cell membranes. The chain is Metalloprotease StcE (stcE) from Escherichia coli O157:H7.